We begin with the raw amino-acid sequence, 310 residues long: p-hydroxybenzoic acid efflux pump subunit AaeA (310 aa).

A helical transmembrane segment spans residues 12–32; the sequence is AITVVLVILAFIAIFNAWVYY.

The protein belongs to the membrane fusion protein (MFP) (TC 8.A.1) family.

It is found in the cell inner membrane. Its function is as follows. Forms an efflux pump with AaeB. In Shigella flexneri, this protein is p-hydroxybenzoic acid efflux pump subunit AaeA.